Reading from the N-terminus, the 98-residue chain is Keratin, high sulfur matrix protein, IIIB3 (98 aa).

At Ala-1 the chain carries N-acetylalanine.

Belongs to the KRTAP type 3 family. As to quaternary structure, interacts with wool keratins. In terms of tissue distribution, wool.

Its function is as follows. In the wool cortex, wool keratin intermediate filaments are embedded in an interfilamentous matrix, consisting of hair keratin-associated proteins (KRTAP), which are essential for the formation of a rigid and resistant wool shaft through their extensive disulfide bond cross-linking with abundant cysteine residues of wool keratins. The matrix proteins include the high-sulfur and high-glycine-tyrosine keratins. This Ovis aries (Sheep) protein is Keratin, high sulfur matrix protein, IIIB3.